A 294-amino-acid polypeptide reads, in one-letter code: MKLIIVSGRSGSGKSTALHVLEDLGFYCIDNLPIGLLFPLTREAATQEAPGRLKKMAVSIDARNLSAELANFETIYQQLKQTGVELEIIFLDADEQSLLQRFHATRRKHPLSDDKTSLREAITNEKQLLEPLSKLADLYVNTTGLSMYELRDMIKQRVAGRKDQELALLFQSFGFKHGVPVDSDYVFDVRCLPNPYWDTSLRKHTGVDQPVIDFLEREPLTRQMVDDLTGFLNTWLPSFADSNRSYMTISIGCTGGQHRSVYVCEQLGRYFRDNYRNVQVRHTELPHLQARGEI.

8–15 provides a ligand contact to ATP; the sequence is GRSGSGKS. 61–64 serves as a coordination point for GTP; the sequence is DARN.

This sequence belongs to the RapZ-like family.

Its function is as follows. Displays ATPase and GTPase activities. The chain is Nucleotide-binding protein Maqu_2718 from Marinobacter nauticus (strain ATCC 700491 / DSM 11845 / VT8) (Marinobacter aquaeolei).